A 299-amino-acid polypeptide reads, in one-letter code: MKVLCTVLVVTLLAGCQADVQPEPEALEPAVRKSDQPWELALGRFWDYLRWVQTLSDQVQEELLSSQVTQELTVLMEDTMKAVKAYKSELEQELVPMAEDTKARLSKELQAAQARLGADMEEVRNRLAQYRSEMQAMLGQSAEELRARLASHLRKLRKKLLRDAEDLQKRLAVYKDGASEGAERSVSAVRERLESLVEQSRARAALTSQPLQERAQAWGKRLRGRLEEVGSQARDRLEEVREQMEEVRVKMEEQAEAFQARLKGWFEPMVEDMRRQWADLIEKVQAAVGASTPTPSQKP.

Residues 1 to 18 (MKVLCTVLVVTLLAGCQA) form the signal peptide. The tract at residues 74–245 (VLMEDTMKAV…RLEEVREQME (172 aa)) is 8 X 22 AA approximate tandem repeats. Tandem repeats lie at residues 75 to 95 (LMED…QELV), 96 to 117 (PMAE…ARLG), 118 to 139 (ADME…AMLG), 140 to 161 (QSAE…KKLL), 162 to 183 (RDAE…EGAE), 184 to 206 (RSVS…RAAL), 207 to 225 (TSQP…LRGR), and 224 to 242 (GRLE…EVRE). Met137 is subject to Methionine sulfoxide. Ser141 is subject to Phosphoserine. Residues 152 to 162 (HLRKLRKKLLR) are LDL and other lipoprotein receptors binding. 156 to 159 (LRKK) serves as a coordination point for heparin. Residues 205–273 (ALTSQPLQER…GWFEPMVEDM (69 aa)) form a lipid-binding and lipoprotein association region. 219 to 226 (GKRLRGRL) provides a ligand contact to heparin. Residues 261 to 273 (RLKGWFEPMVEDM) form a specificity for association with VLDL region.

This sequence belongs to the apolipoprotein A1/A4/E family. As to quaternary structure, homotetramer. May interact with ABCA1; functionally associated with ABCA1 in the biogenesis of HDLs. May interact with APP/A4 amyloid-beta peptide; the interaction is extremely stable in vitro but its physiological significance is unclear. May interact with MAPT. May interact with MAP2. In the cerebrospinal fluid, interacts with secreted SORL1. Interacts with PMEL; this allows the loading of PMEL luminal fragment on ILVs to induce fibril nucleation. In terms of processing, APOE exists as multiple glycosylated and sialylated glycoforms within cells and in plasma. The extent of glycosylation and sialylation are tissue and context specific. Post-translationally, glycated in plasma VLDL. Phosphorylated by FAM20C in the extracellular medium.

It is found in the secreted. It localises to the extracellular space. The protein resides in the extracellular matrix. Its subcellular location is the extracellular vesicle. The protein localises to the endosome. It is found in the multivesicular body. APOE is an apolipoprotein, a protein associating with lipid particles, that mainly functions in lipoprotein-mediated lipid transport between organs via the plasma and interstitial fluids. APOE is a core component of plasma lipoproteins and is involved in their production, conversion and clearance. Apolipoproteins are amphipathic molecules that interact both with lipids of the lipoprotein particle core and the aqueous environment of the plasma. As such, APOE associates with chylomicrons, chylomicron remnants, very low density lipoproteins (VLDL) and intermediate density lipoproteins (IDL) but shows a preferential binding to high-density lipoproteins (HDL). It also binds a wide range of cellular receptors including the LDL receptor/LDLR, the LDL receptor-related proteins LRP1, LRP2 and LRP8 and the very low-density lipoprotein receptor/VLDLR that mediate the cellular uptake of the APOE-containing lipoprotein particles. Finally, APOE also has a heparin-binding activity and binds heparan-sulfate proteoglycans on the surface of cells, a property that supports the capture and the receptor-mediated uptake of APOE-containing lipoproteins by cells. A main function of APOE is to mediate lipoprotein clearance through the uptake of chylomicrons, VLDLs, and HDLs by hepatocytes. APOE is also involved in the biosynthesis by the liver of VLDLs as well as their uptake by peripheral tissues ensuring the delivery of triglycerides and energy storage in muscle, heart and adipose tissues. By participating in the lipoprotein-mediated distribution of lipids among tissues, APOE plays a critical role in plasma and tissues lipid homeostasis. APOE is also involved in two steps of reverse cholesterol transport, the HDLs-mediated transport of cholesterol from peripheral tissues to the liver, and thereby plays an important role in cholesterol homeostasis. First, it is functionally associated with ABCA1 in the biogenesis of HDLs in tissues. Second, it is enriched in circulating HDLs and mediates their uptake by hepatocytes. APOE also plays an important role in lipid transport in the central nervous system, regulating neuron survival and sprouting. The chain is Apolipoprotein E (APOE) from Ctenomys sociabilis (Social tuco-tuco).